The primary structure comprises 79 residues: MSGLGIMVLALLLLVFMATSHQDGGGKQATQRDAINVRRRRSITRRVVTETCKEYCEDRDKTCCGLENGQPDCANLCLG.

Positions M1–S20 are cleaved as a signal peptide. The propeptide occupies H21–T44. Cystine bridges form between C52-C64, C56-C73, and C63-C77. Position 78 is a leucine amide (L78).

The protein belongs to the conotoxin O3 superfamily. In terms of tissue distribution, expressed by the venom duct.

The protein localises to the secreted. This chain is Conotoxin VnMSGL-0122, found in Conus ventricosus (Mediterranean cone).